A 108-amino-acid polypeptide reads, in one-letter code: Nucleoid-associated protein HEAR1046 (108 aa).

The interval 86–108 (TSQEKMAGATAGMPMPPGFKMPF) is disordered. The span at 99–108 (PMPPGFKMPF) shows a compositional bias: pro residues.

The protein belongs to the YbaB/EbfC family. As to quaternary structure, homodimer.

It is found in the cytoplasm. The protein localises to the nucleoid. Binds to DNA and alters its conformation. May be involved in regulation of gene expression, nucleoid organization and DNA protection. This chain is Nucleoid-associated protein HEAR1046, found in Herminiimonas arsenicoxydans.